Here is a 360-residue protein sequence, read N- to C-terminus: Uptake hydrogenase small subunit (360 aa).

A signal peptide (tat-type signal) is located at residues methionine 1–alanine 43. Positions 60, 63, 158, 192, 230, 233, 258, and 264 each coordinate [4Fe-4S] cluster. Residues cysteine 273, cysteine 292, and cysteine 295 each contribute to the [3Fe-4S] cluster site.

Belongs to the [NiFe]/[NiFeSe] hydrogenase small subunit family. In terms of assembly, heterodimer of a large and a small subunit. It depends on [4Fe-4S] cluster as a cofactor. [3Fe-4S] cluster is required as a cofactor. In terms of processing, predicted to be exported by the Tat system. The position of the signal peptide cleavage has been experimentally proven.

Its subcellular location is the cell membrane. It carries out the reaction H2 + A = AH2. In terms of biological role, this enzyme recycles the H(2) produced by nitrogenase to increase the production of ATP and to protect nitrogenase against inhibition or damage by O(2) under carbon- or phosphate-limited conditions. The chain is Uptake hydrogenase small subunit (hoxK) from Cupriavidus necator (strain ATCC 17699 / DSM 428 / KCTC 22496 / NCIMB 10442 / H16 / Stanier 337) (Ralstonia eutropha).